Reading from the N-terminus, the 240-residue chain is Ubiquinone biosynthesis O-methyltransferase (240 aa).

S-adenosyl-L-methionine contacts are provided by Arg-44, Gly-64, Asp-85, and Met-129.

This sequence belongs to the methyltransferase superfamily. UbiG/COQ3 family.

It carries out the reaction a 3-demethylubiquinol + S-adenosyl-L-methionine = a ubiquinol + S-adenosyl-L-homocysteine + H(+). The enzyme catalyses a 3-(all-trans-polyprenyl)benzene-1,2-diol + S-adenosyl-L-methionine = a 2-methoxy-6-(all-trans-polyprenyl)phenol + S-adenosyl-L-homocysteine + H(+). Its pathway is cofactor biosynthesis; ubiquinone biosynthesis. In terms of biological role, O-methyltransferase that catalyzes the 2 O-methylation steps in the ubiquinone biosynthetic pathway. This Shigella flexneri serotype 5b (strain 8401) protein is Ubiquinone biosynthesis O-methyltransferase.